Reading from the N-terminus, the 270-residue chain is Regulatory protein RecX (270 aa).

This sequence belongs to the RecX family.

The protein localises to the cytoplasm. Modulates RecA activity. The sequence is that of Regulatory protein RecX from Bacillus anthracis (strain A0248).